An 83-amino-acid polypeptide reads, in one-letter code: Cytochrome b559 subunit alpha (83 aa).

The helical transmembrane segment at 21–35 (VIHSITVPSLFIAGW) threads the bilayer. Histidine 23 is a binding site for heme.

The protein belongs to the PsbE/PsbF family. In terms of assembly, heterodimer of an alpha subunit and a beta subunit. PSII is composed of 1 copy each of membrane proteins PsbA, PsbB, PsbC, PsbD, PsbE, PsbF, PsbH, PsbI, PsbJ, PsbK, PsbL, PsbM, PsbT, PsbX, PsbY, PsbZ, Psb30/Ycf12, at least 3 peripheral proteins of the oxygen-evolving complex and a large number of cofactors. It forms dimeric complexes. It depends on heme b as a cofactor.

It is found in the plastid. It localises to the chloroplast thylakoid membrane. Its function is as follows. This b-type cytochrome is tightly associated with the reaction center of photosystem II (PSII). PSII is a light-driven water:plastoquinone oxidoreductase that uses light energy to abstract electrons from H(2)O, generating O(2) and a proton gradient subsequently used for ATP formation. It consists of a core antenna complex that captures photons, and an electron transfer chain that converts photonic excitation into a charge separation. This chain is Cytochrome b559 subunit alpha, found in Oltmannsiellopsis viridis (Marine flagellate).